Here is a 618-residue protein sequence, read N- to C-terminus: Proline--tRNA ligase (618 aa).

The protein belongs to the class-II aminoacyl-tRNA synthetase family. ProS type 1 subfamily. As to quaternary structure, homodimer.

Its subcellular location is the cytoplasm. It carries out the reaction tRNA(Pro) + L-proline + ATP = L-prolyl-tRNA(Pro) + AMP + diphosphate. Functionally, catalyzes the attachment of proline to tRNA(Pro) in a two-step reaction: proline is first activated by ATP to form Pro-AMP and then transferred to the acceptor end of tRNA(Pro). As ProRS can inadvertently accommodate and process non-cognate amino acids such as alanine and cysteine, to avoid such errors it has two additional distinct editing activities against alanine. One activity is designated as 'pretransfer' editing and involves the tRNA(Pro)-independent hydrolysis of activated Ala-AMP. The other activity is designated 'posttransfer' editing and involves deacylation of mischarged Ala-tRNA(Pro). The misacylated Cys-tRNA(Pro) is not edited by ProRS. This is Proline--tRNA ligase from Streptococcus pyogenes serotype M5 (strain Manfredo).